Consider the following 102-residue polypeptide: S-phase delaying protein 2 (102 aa).

A disordered region spans residues 43-62 (FPSYHKDQTDRNELPQQKHD). The span at 46-62 (YHKDQTDRNELPQQKHD) shows a compositional bias: basic and acidic residues.

Belongs to the DIF1/spd1 family.

It is found in the cytoplasm. The protein resides in the nucleus. Functionally, regulates the ribonucleotide reductase activity. This Schizosaccharomyces pombe (strain 972 / ATCC 24843) (Fission yeast) protein is S-phase delaying protein 2 (spd2).